Consider the following 347-residue polypeptide: NADH-ubiquinone oxidoreductase chain 2 (347 aa).

The next 11 membrane-spanning stretches (helical) occupy residues 3 to 23, 25 to 45, 59 to 79, 96 to 116, 122 to 142, 145 to 165, 178 to 198, 202 to 222, 240 to 260, 276 to 296, and 326 to 346; these read PLIF…VMIS, HWLM…PVLM, YFLT…INLL, IIMT…FWVP, VSLT…LSVL, IAPV…IMIG, ILAY…IFNP, LLNL…FMTV, ITTS…LTGF, IILA…YMRL, and LSPL…MMIL.

This sequence belongs to the complex I subunit 2 family. Core subunit of respiratory chain NADH dehydrogenase (Complex I) which is composed of 45 different subunits. Interacts with TMEM242.

It localises to the mitochondrion inner membrane. The catalysed reaction is a ubiquinone + NADH + 5 H(+)(in) = a ubiquinol + NAD(+) + 4 H(+)(out). Core subunit of the mitochondrial membrane respiratory chain NADH dehydrogenase (Complex I) which catalyzes electron transfer from NADH through the respiratory chain, using ubiquinone as an electron acceptor. Essential for the catalytic activity and assembly of complex I. This Peropteryx macrotis (Lesser dog-like bat) protein is NADH-ubiquinone oxidoreductase chain 2.